Here is a 255-residue protein sequence, read N- to C-terminus: Small ribosomal subunit protein eS1 (255 aa).

Positions 1–18 are enriched in basic residues; that stretch reads MAVGKNKRLSKGKKGLKK. The segment at 1 to 28 is disordered; the sequence is MAVGKNKRLSKGKKGLKKRTQDPFSRKD. Ala-2 is subject to N-acetylalanine; partial. The span at 19 to 28 shows a compositional bias: basic and acidic residues; that stretch reads RTQDPFSRKD.

Belongs to the eukaryotic ribosomal protein eS1 family. In terms of assembly, component of the small ribosomal subunit. Mature ribosomes consist of a small (40S) and a large (60S) subunit. The 40S subunit contains about 33 different proteins and 1 molecule of RNA (18S). The 60S subunit contains about 49 different proteins and 3 molecules of RNA (25S, 5.8S and 5S).

The protein localises to the cytoplasm. In Ajellomyces dermatitidis (strain ER-3 / ATCC MYA-2586) (Blastomyces dermatitidis), this protein is Small ribosomal subunit protein eS1.